Here is a 145-residue protein sequence, read N- to C-terminus: Deoxyuridine 5'-triphosphate nucleotidohydrolase (145 aa).

Substrate-binding positions include 63–65, Asn76, 80–82, and Lys90; these read RSG and TID.

The protein belongs to the dUTPase family. Mg(2+) is required as a cofactor.

It catalyses the reaction dUTP + H2O = dUMP + diphosphate + H(+). It functions in the pathway pyrimidine metabolism; dUMP biosynthesis; dUMP from dCTP (dUTP route): step 2/2. Functionally, this enzyme is involved in nucleotide metabolism: it produces dUMP, the immediate precursor of thymidine nucleotides and it decreases the intracellular concentration of dUTP so that uracil cannot be incorporated into DNA. The sequence is that of Deoxyuridine 5'-triphosphate nucleotidohydrolase from Clostridium acetobutylicum (strain ATCC 824 / DSM 792 / JCM 1419 / IAM 19013 / LMG 5710 / NBRC 13948 / NRRL B-527 / VKM B-1787 / 2291 / W).